Reading from the N-terminus, the 374-residue chain is Chaperone protein DnaJ (374 aa).

The 66-residue stretch at 5-70 folds into the J domain; it reads DYYEVLGVNR…RKRASYDQFG (66 aa). The segment at 133–210 adopts a CR-type zinc-finger fold; that stretch reads GLSRTIKVPT…CHGQGRQQQT (78 aa). Zn(2+) contacts are provided by Cys146, Cys149, Cys162, Cys165, Cys184, Cys187, Cys198, and Cys201. 4 CXXCXGXG motif repeats span residues 146–153, 162–169, 184–191, and 198–205; these read CKTCNGSG, CPRCNGSG, CSVCRGRG, and CTDCHGQG.

Belongs to the DnaJ family. Homodimer. The cofactor is Zn(2+).

It is found in the cytoplasm. Functionally, participates actively in the response to hyperosmotic and heat shock by preventing the aggregation of stress-denatured proteins and by disaggregating proteins, also in an autonomous, DnaK-independent fashion. Unfolded proteins bind initially to DnaJ; upon interaction with the DnaJ-bound protein, DnaK hydrolyzes its bound ATP, resulting in the formation of a stable complex. GrpE releases ADP from DnaK; ATP binding to DnaK triggers the release of the substrate protein, thus completing the reaction cycle. Several rounds of ATP-dependent interactions between DnaJ, DnaK and GrpE are required for fully efficient folding. Also involved, together with DnaK and GrpE, in the DNA replication of plasmids through activation of initiation proteins. The polypeptide is Chaperone protein DnaJ (Coxiella burnetii (strain CbuG_Q212) (Coxiella burnetii (strain Q212))).